The chain runs to 149 residues: Nucleoside diphosphate kinase (149 aa).

ATP-binding residues include Lys-9, Phe-57, Arg-85, Thr-91, Arg-102, and Asn-112. Residue His-115 is the Pros-phosphohistidine intermediate of the active site.

Belongs to the NDK family. Homotetramer. Requires Mg(2+) as cofactor.

The protein localises to the cytoplasm. The catalysed reaction is dZDP + ATP = dZTP + ADP. It catalyses the reaction a 2'-deoxyribonucleoside 5'-diphosphate + ATP = a 2'-deoxyribonucleoside 5'-triphosphate + ADP. It carries out the reaction a ribonucleoside 5'-diphosphate + ATP = a ribonucleoside 5'-triphosphate + ADP. It participates in purine metabolism. Its function is as follows. Major role in the synthesis of nucleoside triphosphates other than ATP. The ATP gamma phosphate is transferred to the NDP beta phosphate via a ping-pong mechanism, using a phosphorylated active-site intermediate. In terms of biological role, (Microbial infection) Catalyzes the phosphorylation of dZDP to dZTP, when the bacterium is infected by a phage that produces the substrate for the synthesis of dZTP (2- amino-2'-deoxyadenosine 5'-triphosphate), which is then used by the phage as a DNA polymerase substrate. The chain is Nucleoside diphosphate kinase from Synechococcus elongatus (strain ATCC 33912 / PCC 7942 / FACHB-805) (Anacystis nidulans R2).